We begin with the raw amino-acid sequence, 371 residues long: 4-hydroxyprotoasukamycin monooxygenase (371 aa).

This sequence belongs to the bacterial luciferase oxidoreductase family. It depends on FMN as a cofactor.

The catalysed reaction is 4-hydroxyprotoasukamycin + NADH + O2 + H(+) = asukamycin + NAD(+) + H2O. It participates in antibiotic biosynthesis. Involved in the biosynthesis of the antibiotic asukamycin. Catalyzes the epoxidation of 4-hydroxyprotoasukamycin to the final product, asukamycin. Can also convert some 4-hydroxyprotoasukamycin derivatives to their asukamycin derivatives, but cannot use protoasukamycin as substrate. Can also use NADPH, but catalytic efficiency is 20-fold higher with NADH. In Streptomyces nodosus subsp. asukaensis, this protein is 4-hydroxyprotoasukamycin monooxygenase.